Reading from the N-terminus, the 87-residue chain is U3-theraphotoxin-Hhn1c (87 aa).

The first 24 residues, M1–A24, serve as a signal peptide directing secretion. A propeptide spanning residues S25 to R52 is cleaved from the precursor. 3 disulfide bridges follow: C54-C67, C61-C72, and C66-C79.

Belongs to the neurotoxin 10 (Hwtx-1) family. 51 (Hntx-8) subfamily. Hntx-8 sub-subfamily. In terms of tissue distribution, expressed by the venom gland.

Its subcellular location is the secreted. Ion channel inhibitor. This Cyriopagopus hainanus (Chinese bird spider) protein is U3-theraphotoxin-Hhn1c.